The chain runs to 546 residues: MKKFLKYLLVLIILILIAGIVFLFRPIASKQVQTAKDEPVVDAVLVGGGIMSATLGTYFTELEPNWQIRMFERLDQVAQESSNGFNNAGTGHSGFMEMNYTEEKNGKMEIAKAEKVASQFEVAKQFWSYQVKQGVLAEPKTFINPVPHIAFVWGDNVKFLEKRYAAMIQSPLFKGMKFTEDPAVIKQWAPLVMTDRDPTQKVAATRMEVGSDVNYGSITKQLVNHLNQNPNFKLQTSTEVTGISQNDDKTWTVSFKNLKTGKTDHVKTRFVFIGAGGAAVKLLQLTGLPEAKQYAGFPVGGEFLITDNPAITAQHTAKVYGRAELGAPPMSVPHIDTRYIDGKKYVLFGPFATYSNKFLKNGSQLDLLASTNKSNVLPMTTVGLENLDLVKYLVSQVMMSDEDRLNELRKYYPDAKAEDWRLSQGGQRVQIIKKEPGKPATLQFGTEIFASKDGAVTALLGASPGASTSPYIMLNLLEKAFPQQTEGKWNQKLHEIVVSYKQDLSKDPVLLDKVRQYTSSTLGLNYTSPFKAANDETAAAPVAKAN.

Belongs to the MQO family. FAD is required as a cofactor.

The catalysed reaction is (S)-malate + a quinone = a quinol + oxaloacetate. It functions in the pathway carbohydrate metabolism; tricarboxylic acid cycle; oxaloacetate from (S)-malate (quinone route): step 1/1. The sequence is that of Probable malate:quinone oxidoreductase from Acinetobacter baumannii (strain ACICU).